The sequence spans 469 residues: MVRVRFAPSPTGFLHVGGARTALFNFLFARKEKGKFILRIEDTDLERSEREYEEKLMESLRWLGLLWDEGPDVGGDHGPYRQSERVEIYREHAERLVKEGKAYYVYAYPEEIEEMREKLLSEGKAPHYSQEMFEKFDTPERRREYEEKGLRPAVFFKMPRKDYVLNDVVKGEVVFKTGAIGDFVIMRSNGLPTYNFACVVDDMLMEITHVIRGDDHLSNTLRQLALYEAFEKAPPVFAHVSTILGPDGKKLSKRHGATSVEAFRDMGYLPEALVNYLALLGWSHPEGKELLTLEELISSFSLDRLSPNPAIFDPQKLKWMNGYYLRNMPIEKLAELAKPFFEKAGIKIIDEEYFKKVLEITKERVEVLSEFPEESRFFFEDPAPVEIPEEMKEVFSQLKEELQNVRWTMEEITPVFKKVLKQHGVKPKEFYMTLRRVLTGREEGPELVNIIPLLGKEIFLRRIERSLGG.

A 'HIGH' region motif is present at residues 8-18 (PSPTGFLHVGG). Positions 250 to 254 (KLSKR) match the 'KMSKS' region motif. Lys253 contributes to the ATP binding site.

Belongs to the class-I aminoacyl-tRNA synthetase family. Glutamate--tRNA ligase type 1 subfamily. As to quaternary structure, monomer.

It localises to the cytoplasm. It catalyses the reaction tRNA(Glu) + L-glutamate + ATP = L-glutamyl-tRNA(Glu) + AMP + diphosphate. In terms of biological role, catalyzes the attachment of glutamate to tRNA(Glu) in a two-step reaction: glutamate is first activated by ATP to form Glu-AMP and then transferred to the acceptor end of tRNA(Glu). The sequence is that of Glutamate--tRNA ligase 2 from Thermotoga petrophila (strain ATCC BAA-488 / DSM 13995 / JCM 10881 / RKU-1).